The sequence spans 105 residues: Thioredoxin (105 aa).

In terms of domain architecture, Thioredoxin spans 1–105; that stretch reads ATMTLTDANF…LEAQLADVLQ (105 aa). Cysteine 29 and cysteine 32 are disulfide-bonded.

Participates in various redox reactions through the reversible oxidation of its active center dithiol to a disulfide and catalyzes dithiol-disulfide exchange reactions. In Alicyclobacillus acidocaldarius subsp. acidocaldarius (Bacillus acidocaldarius), this protein is Thioredoxin (trxA).